The primary structure comprises 208 residues: Proheparin-binding EGF-like growth factor (208 aa).

Residues 1–19 (MKLLPSVVLKLLLAAVLSA) form the signal peptide. Positions 20 to 62 (LVTGESLEQLRRGLAAGTSNPDPSTGSTDQLLRLGGGRDRKVR) are excised as a propeptide. Over 20–160 (LVTGESLEQL…ENRLYTYDHT (141 aa)) the chain is Extracellular. Residues 34-55 (AAGTSNPDPSTGSTDQLLRLGG) are disordered. Positions 36–49 (GTSNPDPSTGSTDQ) are enriched in polar residues. O-linked (GalNAc...) threonine glycans are attached at residues Thr75 and Thr85. The disordered stretch occupies residues 81–104 (QALATPSKEEHGKRKKKGKGLGKK). Residues 93 to 102 (KRKKKGKGLG) show a composition bias toward basic residues. The EGF-like domain occupies 104–144 (KRDPCLRKYKDFCIHGECKYVKELRAPSCICHPGYHGERCH). Intrachain disulfides connect Cys108-Cys121, Cys116-Cys132, and Cys134-Cys143. Positions 136–148 (PGYHGERCHGLSL) are toxin-binding domain. A propeptide spans 149–208 (PVENRLYTYDHTTILAVVAVVLSSVCLLVIVGLLMFRYHRRGGYDVENEEKVKLGMTNSH) (C-terminal). The helical transmembrane segment at 161 to 184 (TILAVVAVVLSSVCLLVIVGLLMF) threads the bilayer. Residues 185–208 (RYHRRGGYDVENEEKVKLGMTNSH) are Cytoplasmic-facing.

Interacts with EGFR and ERBB4. Interacts with FBLN1. In terms of processing, O-glycosylated.

The protein localises to the secreted. It is found in the extracellular space. The protein resides in the cell membrane. Functionally, growth factor that mediates its effects via EGFR, ERBB2 and ERBB4. Required for normal cardiac valve formation and normal heart function. Promotes smooth muscle cell proliferation. May be involved in macrophage-mediated cellular proliferation. It is mitogenic for fibroblasts, but not endothelial cells. It is able to bind EGF receptor/EGFR with higher affinity than EGF itself and is a far more potent mitogen for smooth muscle cells than EGF. Also acts as a diphtheria toxin receptor. In Chlorocebus aethiops (Green monkey), this protein is Proheparin-binding EGF-like growth factor (HBEGF).